The sequence spans 257 residues: UPF0246 protein YaaA (257 aa).

The protein belongs to the UPF0246 family.

In Salmonella typhi, this protein is UPF0246 protein YaaA.